We begin with the raw amino-acid sequence, 474 residues long: MNFWLQEQAQSNGNRLAIVTNQLSLTYEELYHRAKTIAQYLTSLNQKRIGLYISNDIDSVVLIHACWLAHIEIAMINTRLTRHEMINQMNSVDIATIVHTLPLELEGFNLYHFNDLTQLDKHDVSGYKFNLESIASIMFTSGTTGPQKAVPQTFNNHLASAKGCKQSLGFEQNTVWLSVLPIYHISGLSVILRAVIEGFTVRLVKKFQTDDMLTQIKTYPITHMSLVPQTLKWLMDAGLTQPFSLEKILLGGAKLSPQLIEQAFAYRLPVYNSFGMTETCSQFLTASPQMLKERFDTVGKTSENVEVKIKNPNAYGHGELLIKGENVMNGYLYPKYLKDTFDNDGYFQTGDIAEIDDEGYVIIYDRRKDLIISGGENIYPYQIETIAKDFEGIEDAVCVGISDDTWGQVPILYYVTNQDINQNELIEHFENHLARYKIPKKYYQVESLPYTSTGKLQRKKVKSEDLNEGKNNES.

It belongs to the ATP-dependent AMP-binding enzyme family. MenE subfamily.

The enzyme catalyses 2-succinylbenzoate + ATP + CoA = 2-succinylbenzoyl-CoA + AMP + diphosphate. Its pathway is quinol/quinone metabolism; 1,4-dihydroxy-2-naphthoate biosynthesis; 1,4-dihydroxy-2-naphthoate from chorismate: step 5/7. The protein operates within quinol/quinone metabolism; menaquinone biosynthesis. Its function is as follows. Converts 2-succinylbenzoate (OSB) to 2-succinylbenzoyl-CoA (OSB-CoA). The chain is 2-succinylbenzoate--CoA ligase from Staphylococcus epidermidis (strain ATCC 12228 / FDA PCI 1200).